Reading from the N-terminus, the 643-residue chain is Clathrin interactor 1 (643 aa).

Residues 16–149 form the ENTH domain; the sequence is NVVMNYSEIE…QDDDRLREER (134 aa). An a 1,2-diacyl-sn-glycero-3-phospho-(1D-myo-inositol-4,5-bisphosphate)-binding site is contributed by R29. The segment at 52–54 is interaction with VTI1B; it reads FMY. R67 contributes to the a 1,2-diacyl-sn-glycero-3-phospho-(1D-myo-inositol-4,5-bisphosphate) binding site. Interaction with VTI1B regions lie at residues 94–96 and 142–153; these read SER and DDRLREERKKAK. Residues S163, S166, S173, S205, S210, S227, S245, and S299 each carry the phosphoserine modification. The disordered stretch occupies residues 219–331; sequence FRRKDREDSP…SSGDLVDLFD (113 aa). The span at 222 to 239 shows a compositional bias: basic and acidic residues; the sequence is KDREDSPERCSDSDEEKK. Positions 300–310 are enriched in polar residues; sequence PDQNASTHTPQ. Position 308 is a phosphothreonine (T308). Residues 311-323 are compositionally biased toward low complexity; that stretch reads SSLKTSVPSSKSS. A phosphoserine mark is found at S312 and S642.

Belongs to the epsin family. In terms of assembly, binds clathrin heavy chain and AP-2. Interacts with VTI1B. Interacts with GGA2 (via GAE domain). Interacts with AP1G1 (via GAE domain). Interacts with AP1G2 (via GAE domain).

It is found in the cytoplasm. Its subcellular location is the perinuclear region. It localises to the membrane. The protein resides in the cytoplasmic vesicle. The protein localises to the clathrin-coated vesicle. In terms of biological role, binds to membranes enriched in phosphatidylinositol 4,5-bisphosphate (PtdIns(4,5)P2). May have a role in transport via clathrin-coated vesicles from the trans-Golgi network to endosomes. Stimulates clathrin assembly. The polypeptide is Clathrin interactor 1 (CLINT1) (Bos taurus (Bovine)).